Consider the following 103-residue polypeptide: Zinc-containing ferredoxin (103 aa).

The tract at residues Gly1 to Thr36 is N-terminal extension. Residue His19 coordinates Zn(2+). N6-methyllysine is present on Lys29. Zn(2+) is bound at residue His34. 4Fe-4S ferredoxin-type domains lie at Gly35–Thr65 and Lys74–Pro103. 2 residues coordinate [3Fe-4S] cluster: Cys45 and Cys51. A [4Fe-4S] cluster-binding site is contributed by Cys55. Asp76 contacts Zn(2+). [4Fe-4S] cluster-binding residues include Cys83, Cys86, and Cys89. Residue Cys93 coordinates [3Fe-4S] cluster.

[3Fe-4S] cluster is required as a cofactor. [4Fe-4S] cluster serves as cofactor. Requires Zn(2+) as cofactor.

In terms of biological role, ferredoxins are iron-sulfur proteins that transfer electrons in a wide variety of metabolic reactions. This chain is Zinc-containing ferredoxin (zfx), found in Sulfolobus acidocaldarius (strain ATCC 33909 / DSM 639 / JCM 8929 / NBRC 15157 / NCIMB 11770).